The primary structure comprises 491 residues: Feruloyl-CoA synthase (491 aa).

Mg(2+) is bound at residue T154. ATP is bound by residues A199, G291, and T295. E296 lines the Mg(2+) pocket. ATP is bound by residues D374 and K391.

The protein belongs to the ATP-dependent AMP-binding enzyme family. Mg(2+) serves as cofactor.

The catalysed reaction is (E)-ferulate + ATP + CoA = (E)-feruloyl-CoA + AMP + diphosphate. In terms of biological role, catalyzes the formation of (E)-feruloyl-CoA, AMP and diphosphate from (E)-ferulate, CoA and ATP. Involved in the degradation pathway of lignin-derived aromatic compounds of plant cell walls. Catalyzes the first enzymatic step in the conversion of ferulic acid into high value compound vanillin. The sequence is that of Feruloyl-CoA synthase from Amycolatopsis sp.